The chain runs to 163 residues: UPF0523 protein B (163 aa).

Belongs to the UPF0523 family.

This is UPF0523 protein B from Dictyostelium discoideum (Social amoeba).